A 25-amino-acid polypeptide reads, in one-letter code: Ribosome-inactivating protein charantin (25 aa).

In terms of assembly, monomer.

The enzyme catalyses Endohydrolysis of the N-glycosidic bond at one specific adenosine on the 28S rRNA.. In terms of biological role, inhibits cell-free translation in a rabbit reticulocyte lysate system. This chain is Ribosome-inactivating protein charantin, found in Momordica charantia (Bitter gourd).